The primary structure comprises 323 residues: MKTTFLDFEQPIAELEAKIEELRFVQDDSAVDISEEISRLAGKSQQLTKDIYANLTPWQVAQIARHPQRPYTLDYVREIFTDFHELHGDRTFADDLSIVGGLARFNGQSCMVIGHQKGRDTKERAMRNFGMPKPEGYRKAKRLMELADKFGLPIFTFVDTPGAFPGIDAEERGQSEAIGHNLYVMAGLKVPLIATIIGEGGSGGALAIAVGDVVQMLQFATYAVISPEGCASILWKTAEKAPEAAEALGLTAHRLKALGLIDKIVSEPLGGAHRDVKGMAAMLKRSLAESLRQFQGVSVKELQARRYERLLAYGKFKETGAQE.

One can recognise a CoA carboxyltransferase C-terminal domain in the interval 39-293 (RLAGKSQQLT…KRSLAESLRQ (255 aa)).

Belongs to the AccA family. In terms of assembly, acetyl-CoA carboxylase is a heterohexamer composed of biotin carboxyl carrier protein (AccB), biotin carboxylase (AccC) and two subunits each of ACCase subunit alpha (AccA) and ACCase subunit beta (AccD).

The protein localises to the cytoplasm. The enzyme catalyses N(6)-carboxybiotinyl-L-lysyl-[protein] + acetyl-CoA = N(6)-biotinyl-L-lysyl-[protein] + malonyl-CoA. The protein operates within lipid metabolism; malonyl-CoA biosynthesis; malonyl-CoA from acetyl-CoA: step 1/1. Component of the acetyl coenzyme A carboxylase (ACC) complex. First, biotin carboxylase catalyzes the carboxylation of biotin on its carrier protein (BCCP) and then the CO(2) group is transferred by the carboxyltransferase to acetyl-CoA to form malonyl-CoA. The protein is Acetyl-coenzyme A carboxylase carboxyl transferase subunit alpha of Cupriavidus pinatubonensis (strain JMP 134 / LMG 1197) (Cupriavidus necator (strain JMP 134)).